A 337-amino-acid polypeptide reads, in one-letter code: Phosphatidylglycerophosphate phosphatase PTPMT1 (337 aa).

Residues 1–20 (MYIKELTETDEEKRERSVED) form a disordered region. Substrate is bound by residues Tyr55 and Asp133. Residues 73–220 (WWDRVAEFIL…VVEYYHVKVL (148 aa)) enclose the Tyrosine-protein phosphatase domain. The active-site Phosphocysteine intermediate is the Cys164. Positions 164-170 (CKAGRGR) match the Glucan phosphatase signature motif CXAGXGR motif. 165–170 (KAGRGR) is a binding site for substrate.

Belongs to the protein-tyrosine phosphatase family. Non-receptor class dual specificity subfamily. In terms of tissue distribution, expressed in stems, roots, flowers, mature seeds and leaves.

It catalyses the reaction O-phospho-L-seryl-[protein] + H2O = L-seryl-[protein] + phosphate. It carries out the reaction O-phospho-L-threonyl-[protein] + H2O = L-threonyl-[protein] + phosphate. The enzyme catalyses O-phospho-L-tyrosyl-[protein] + H2O = L-tyrosyl-[protein] + phosphate. The catalysed reaction is a 1,2-diacyl-sn-glycero-3-phospho-(1'-sn-glycero-3'-phosphate) + H2O = a 1,2-diacyl-sn-glycero-3-phospho-(1'-sn-glycerol) + phosphate. The protein operates within phospholipid metabolism; phosphatidylglycerol biosynthesis; phosphatidylglycerol from CDP-diacylglycerol: step 2/2. Exhibits phosphatidylglycerophosphate phosphatase activity. Involved in root growth and columella cells organization. May possess protein phosphatase activity. This chain is Phosphatidylglycerophosphate phosphatase PTPMT1, found in Arabidopsis thaliana (Mouse-ear cress).